Here is a 694-residue protein sequence, read N- to C-terminus: Acetyl-coenzyme A synthetase (694 aa).

Positions 1–23 are disordered; the sequence is MSDKRPRSPCSNNNDELNDSSVL. The segment covering 9–23 has biased composition (polar residues); that stretch reads PCSNNNDELNDSSVL. Residues 229–232 and Thr347 contribute to the CoA site; that span reads RGKK. Residues 423 to 425, 447 to 452, Asp536, and Arg551 contribute to the ATP site; these read GEP and DTYWQT. Ser559 contacts CoA. Arg562 contacts ATP. Arg628 is a CoA binding site.

The protein belongs to the ATP-dependent AMP-binding enzyme family.

The enzyme catalyses acetate + ATP + CoA = acetyl-CoA + AMP + diphosphate. The chain is Acetyl-coenzyme A synthetase (ACS) from Cryptosporidium parvum.